The sequence spans 121 residues: uncharacterized protein (121 aa).

The tract at residues Met1 to Asp121 is disordered. Gly2 is lipidated: N-myristoyl glycine. The S-palmitoyl cysteine moiety is linked to residue Cys8. Basic and acidic residues-rich tracts occupy residues Lys11–Thr23, Ala73–Lys83, Arg90–Gln105, and Gln112–Asp121.

This sequence to yeast YGL108C. Myristoylated. Post-translationally, the N-myristoylated protein is further palmitoylated.

The protein resides in the cytoplasm. It localises to the cytosol. This is an uncharacterized protein from Schizosaccharomyces pombe (strain 972 / ATCC 24843) (Fission yeast).